The chain runs to 1200 residues: MDAVNAFNQELFSLMDMKPPISRAKMILITKAAIKAIKLYKHVVQIVEKFIKKCKPEYKVPGLYVIDSIVRQSRHQFGTDKDVFGPRFSKNITATFQYLYLCPSEDKSKIVRVLNLWQKNGVFKIEIIQPLLDMAAGTSNAAPGAENVTNNEGSPPPPVKVSSELPQAPTNSMPAVPQLPSSDAFAAVAQLFQTTQGQQLQQILQTFQQPPKPQSPALDSAVMAQVQAITAQLKTAPTQPPEQKTAFDKKLLDRFDYDDEPEAVEDSKKEDAVAVATTALATAAPPVPAAATPAVAPAVPASSATSPPPPQAPFGYPGDGMQQPAYTQHQNVDQFQPRMMALQQDSMQHQVPLPPNGQMPGFGLLSAPPPFPPMPQPGMPQPGMPQPGMPQPGLSQPGLPQPGMPQPGMPQPGMPQPGMPQPGLPQPGLPQPGMPQPGMPQPGMPQPGMPQPGMPPTPPVQPTFQPTFQPQNEPHSQKPHQQEMEVEQPCVTEVKRHVPESRKSRSRSPKRRRSRSGSRSRRSRHRRSRSRSRDRRRHSPRSRSQERRDREKERERRQKGLPQIKSETASVCSTTLWVGQLDKRTTQQDVASLLEEFGPIESINMIPPRGCAYIVMVHRQDAYRALQKLSRGNYKVNQKSIKIAWALNKGIKADFKQYWDVELGVTYIPWDKVKAEELESFCEGGMLDSDTLNPDWKGIPKKPENEVAQNGGAEASHTEPVSPIPKPVPVPVPALPVPAPITVPPPQVPPHQPGPPVVGALQPPAFTPPLGIPPPGFGPGVPPPPPPPPPFLRPGFNPMHLPPGFLPPGPPPPITPPVSIPPPHTPPISIPNLVSGARGNAESADSAKMYGSAGPPAAPTSLPTPPVTQPVSLLGTQGVAPGPVIGLQAPSTGLLGARPGLIPLQRPPGMPPPHLQRFPMMPPRPMPPHMMHRGPPPGPGGFAMPPPHGMKGPFPPHGPFVRPGGMPGLGGPGPGPGGSEDRDGRQQQPQQQQQQQQQQQQQQQQQQQQPPPQQSQTQQQPAPSQQPAPAQQQPQQFRNDNRQQFNSGRDQERFGRRSFGSRVENDRERYGSRSDERDNSNRERREWGRRSPERDRHRDLEERSRRSSGHRDRDRDSRDRESRREKEESRGKEKHEVADRAGGNKAVEAPLSQVGNTDTVSELNKGEAMATVVKPEESPAEATSSVEPEKDSGSAAEAPR.

A CID domain is found at 1 to 139 (MDAVNAFNQE…PLLDMAAGTS (139 aa)). Lysine 49 carries the N6-acetyllysine modification. The segment covering 140–153 (NAAPGAENVTNNEG) has biased composition (polar residues). Disordered regions lie at residues 140–172 (NAAPGAENVTNNEGSPPPPVKVSSELPQAPTNS), 299–324 (VPASSATSPPPPQAPFGYPGDGMQQP), and 346–566 (SMQH…QIKS). The residue at position 154 (serine 154) is a Phosphoserine. Composition is skewed to pro residues over residues 367–390 (APPPFPPMPQPGMPQPGMPQPGMP) and 399–461 (LPQP…PPVQ). A compositionally biased stretch (low complexity) spans 462–471 (PTFQPTFQPQ). A compositionally biased stretch (basic and acidic residues) spans 493 to 503 (EVKRHVPESRK). A compositionally biased stretch (basic residues) spans 504-541 (SRSRSPKRRRSRSGSRSRRSRHRRSRSRSRDRRRHSPR). Basic and acidic residues predominate over residues 543–558 (RSQERRDREKERERRQ). The region spanning 574-648 (TTLWVGQLDK…KSIKIAWALN (75 aa)) is the RRM domain. Disordered stretches follow at residues 696-724 (WKGIPKKPENEVAQNGGAEASHTEPVSPI), 834-875 (VSGA…SLLG), and 927-1200 (PPHM…EAPR). A Phosphoserine modification is found at serine 722. 2 stretches are compositionally biased toward pro residues: residues 856-868 (PAAPTSLPTPPVT) and 927-958 (PPHMMHRGPPPGPGGFAMPPPHGMKGPFPPHG). Over residues 965-978 (GMPGLGGPGPGPGG) the composition is skewed to gly residues. Over residues 986–1036 (QQQPQQQQQQQQQQQQQQQQQQQQPPPQQSQTQQQPAPSQQPAPAQQQPQQ) the composition is skewed to low complexity. Serine 1058 carries the phosphoserine modification. Over residues 1063 to 1139 (VENDRERYGS…RGKEKHEVAD (77 aa)) the composition is skewed to basic and acidic residues. Residues 1153–1162 (QVGNTDTVSE) are compositionally biased toward polar residues. Position 1178 is a phosphoserine (serine 1178).

Interacts with POLR2A; via C-terminal heptapeptide repeat domain (CTD) phosphorylated at 'Ser-2' and 'Ser-5'.

Its subcellular location is the nucleus. In terms of biological role, anti-terminator protein required to prevent early mRNA termination during transcription. Together with SCAF8, acts by suppressing the use of early, alternative poly(A) sites, thereby preventing the accumulation of non-functional truncated proteins. Mechanistically, associates with the phosphorylated C-terminal heptapeptide repeat domain (CTD) of the largest RNA polymerase II subunit (POLR2A), and subsequently binds nascent RNA upstream of early polyadenylation sites to prevent premature mRNA transcript cleavage and polyadenylation. Independently of SCAF8, also acts as a suppressor of transcriptional readthrough. The protein is SR-related and CTD-associated factor 4 of Rattus norvegicus (Rat).